A 211-amino-acid polypeptide reads, in one-letter code: ATP phosphoribosyltransferase (211 aa).

It belongs to the ATP phosphoribosyltransferase family. Short subfamily. In terms of assembly, heteromultimer composed of HisG and HisZ subunits.

It localises to the cytoplasm. It carries out the reaction 1-(5-phospho-beta-D-ribosyl)-ATP + diphosphate = 5-phospho-alpha-D-ribose 1-diphosphate + ATP. The protein operates within amino-acid biosynthesis; L-histidine biosynthesis; L-histidine from 5-phospho-alpha-D-ribose 1-diphosphate: step 1/9. Its function is as follows. Catalyzes the condensation of ATP and 5-phosphoribose 1-diphosphate to form N'-(5'-phosphoribosyl)-ATP (PR-ATP). Has a crucial role in the pathway because the rate of histidine biosynthesis seems to be controlled primarily by regulation of HisG enzymatic activity. The sequence is that of ATP phosphoribosyltransferase from Lacticaseibacillus paracasei (strain ATCC 334 / BCRC 17002 / CCUG 31169 / CIP 107868 / KCTC 3260 / NRRL B-441) (Lactobacillus paracasei).